The primary structure comprises 266 residues: MRIEVVNVSHIFHRGTPLEKKALENVSLVINEGECLLVAGNTGSGKSTLLQIVAGLIEPTSGDVLYDGERKKGYEIRRNIGIAFQYPEDQFFAERVFDEVAFAVKNFYPDRDPVPLVKKAMEFVGLDFDSFKDRVPFFLSGGEKRRVAIASVIVHEPDILILDEPLVGLDREGKTDLLRIVEKWKTLGKTVILISHDIETVINHVDRVVVLEKGKKVFDGTRMEFLEKYDPRFFTSKMLVMRRLVLKGEDPFSMSDDELLERVCNS.

The ABC transporter domain maps to 3 to 238; sequence IEVVNVSHIF…YDPRFFTSKM (236 aa). 43–48 contacts ATP; it reads GSGKST. The active-site Proton acceptor is the Glu-164. The required for heterodimer formation stretch occupies residues 220 to 266; that stretch reads GTRMEFLEKYDPRFFTSKMLVMRRLVLKGEDPFSMSDDELLERVCNS.

The protein belongs to the ABC transporter superfamily. Energy-coupling factor EcfA family. As to quaternary structure, forms a heterodimer with EcfA1. Forms a stable energy-coupling factor (ECF) transporter complex composed of 2 membrane-embedded substrate-binding proteins (S component, RibU, BioY), 2 ATP-binding proteins (A component) and 2 transmembrane proteins (T component) upon coexpression in E.coli. Stable subcomplexes with both A plus T components can also be isolated. This complex interacts with at least 2 substrate-specific components, BioY and RibU.

It is found in the cell inner membrane. In terms of biological role, ATP-binding (A) component of a common energy-coupling factor (ECF) ABC-transporter complex. Unlike classic ABC transporters this ECF transporter provides the energy necessary to transport a number of different substrates. Expression of the complex plus RibU in E.coli allows riboflavin uptake; uptake does not occur in the absence of RibU or the EcfA1A2T complex. This is Energy-coupling factor transporter ATP-binding protein EcfA2 (ecfA2) from Thermotoga maritima (strain ATCC 43589 / DSM 3109 / JCM 10099 / NBRC 100826 / MSB8).